The chain runs to 58 residues: Large ribosomal subunit protein uL30 (58 aa).

The protein belongs to the universal ribosomal protein uL30 family. Part of the 50S ribosomal subunit.

The chain is Large ribosomal subunit protein uL30 from Bacteroides fragilis (strain ATCC 25285 / DSM 2151 / CCUG 4856 / JCM 11019 / LMG 10263 / NCTC 9343 / Onslow / VPI 2553 / EN-2).